The primary structure comprises 76 residues: uncharacterized protein (76 aa).

A signal peptide spans 1 to 15; sequence MYLPLLLFCVISCYG.

This is an uncharacterized protein from Magallana gigas (Pacific oyster).